We begin with the raw amino-acid sequence, 124 residues long: Small ribosomal subunit protein uS12 (124 aa).

At Asp-89 the chain carries 3-methylthioaspartic acid. A disordered region spans residues 105–124 (SGVSDRRQGRSKYGAKRPKS). Residues 113-124 (GRSKYGAKRPKS) show a composition bias toward basic residues.

It belongs to the universal ribosomal protein uS12 family. As to quaternary structure, part of the 30S ribosomal subunit. Contacts proteins S8 and S17. May interact with IF1 in the 30S initiation complex.

With S4 and S5 plays an important role in translational accuracy. Functionally, interacts with and stabilizes bases of the 16S rRNA that are involved in tRNA selection in the A site and with the mRNA backbone. Located at the interface of the 30S and 50S subunits, it traverses the body of the 30S subunit contacting proteins on the other side and probably holding the rRNA structure together. The combined cluster of proteins S8, S12 and S17 appears to hold together the shoulder and platform of the 30S subunit. This Colwellia psychrerythraea (strain 34H / ATCC BAA-681) (Vibrio psychroerythus) protein is Small ribosomal subunit protein uS12.